A 93-amino-acid polypeptide reads, in one-letter code: UPF0728 protein C10orf53 homolog (93 aa).

The protein belongs to the UPF0728 family.

The protein is UPF0728 protein C10orf53 homolog of Bos taurus (Bovine).